The chain runs to 416 residues: Multifunctional CCA protein (416 aa).

Residues glycine 8 and arginine 11 each coordinate ATP. CTP contacts are provided by glycine 8 and arginine 11. Mg(2+) contacts are provided by aspartate 21 and aspartate 23. ATP contacts are provided by arginine 91, arginine 138, and arginine 141. CTP-binding residues include arginine 91, arginine 138, and arginine 141. The HD domain occupies 229 to 331 (TGLHQELVSD…YELLQRCDAF (103 aa)).

It belongs to the tRNA nucleotidyltransferase/poly(A) polymerase family. Bacterial CCA-adding enzyme type 1 subfamily. In terms of assembly, monomer. Can also form homodimers and oligomers. Requires Mg(2+) as cofactor. Ni(2+) serves as cofactor.

It carries out the reaction a tRNA precursor + 2 CTP + ATP = a tRNA with a 3' CCA end + 3 diphosphate. The enzyme catalyses a tRNA with a 3' CCA end + 2 CTP + ATP = a tRNA with a 3' CCACCA end + 3 diphosphate. Catalyzes the addition and repair of the essential 3'-terminal CCA sequence in tRNAs without using a nucleic acid template. Adds these three nucleotides in the order of C, C, and A to the tRNA nucleotide-73, using CTP and ATP as substrates and producing inorganic pyrophosphate. tRNA 3'-terminal CCA addition is required both for tRNA processing and repair. Also involved in tRNA surveillance by mediating tandem CCA addition to generate a CCACCA at the 3' terminus of unstable tRNAs. While stable tRNAs receive only 3'-terminal CCA, unstable tRNAs are marked with CCACCA and rapidly degraded. The protein is Multifunctional CCA protein of Xylella fastidiosa (strain M23).